The primary structure comprises 2090 residues: Host cell factor 1 (2090 aa).

Ala-2 bears the N-acetylalanine mark. The residue at position 6 (Ser-6) is a Phosphoserine. Kelch repeat units follow at residues 44 to 89, 93 to 140, 148 to 194, 217 to 265, and 266 to 313; these read LIVV…GFVC, RLLV…RLGH, KCYL…ITYG, KLVI…TIGN, and KMYV…LMDT. Residues Lys-105, Lys-163, and Lys-244 each participate in a glycyl lysine isopeptide (Lys-Gly) (interchain with G-Cter in ubiquitin) cross-link. Residue Lys-282 forms a Glycyl lysine isopeptide (Lys-Gly) (interchain with G-Cter in SUMO2) linkage. Lys-288 carries the N6-acetyllysine modification. A Glycyl lysine isopeptide (Lys-Gly) (interchain with G-Cter in ubiquitin) cross-link involves residue Lys-363. A Fibronectin type-III 1 domain is found at 366-469; the sequence is PPARVQLVRA…TIQVLPTVPG (104 aa). Residues 407–434 form a disordered region; sequence ATATSPTPNPVPSVPANPPKSPAPAAAA. Ser-411 bears the Phosphoserine mark. The span at 413 to 428 shows a compositional bias: pro residues; the sequence is TPNPVPSVPANPPKSP. Positions 500–550 are required for interaction with OGT; sequence LVTMRPAGQAGKAPVTVTSLPASVRMVVPTQSAQGTVIGSNPQMSGMAALA. Omega-N-methylarginine occurs at positions 504 and 524. Ser-598, Ser-666, and Ser-669 each carry phosphoserine. The interaction with SIN3A stretch occupies residues 610–722; that stretch reads LKTAAAQVGT…KGPLPAGTIL (113 aa). An interaction with ZBTB17 region spans residues 750 to 902; it reads ILGISSVSPS…SLAGAGAHST (153 aa). Lys-813 carries the post-translational modification N6-acetyllysine. The tract at residues 813 to 912 is interaction with GABP2; sequence KIITAVPKIA…SASLATPITT (100 aa). HCF repeat repeat units follow at residues 1010 to 1035, 1072 to 1097, and 1101 to 1126; these read TLVC…TVVA, VRVC…ATSN, and QHGC…AMSS. The disordered stretch occupies residues 1098–1140; that stretch reads MAGQHGCSNPPCETHETGTTSTATTAMSSMGTGQQRDTRHTSS. Low complexity predominate over residues 1114-1130; sequence TGTTSTATTAMSSMGTG. The HCF repeat 4; degenerate repeat unit spans residues 1157 to 1182; sequence TQGTVKPQCQTQQANMTNTTMTVQAT. Residue Ser-1204 is modified to Phosphoserine. Arg-1216 bears the Asymmetric dimethylarginine mark. Residue Ser-1223 is modified to Phosphoserine. 2 HCF repeat repeats span residues 1295-1320 and 1323-1348; these read TQVC…SNAG and QRVC…ATSN. Disordered regions lie at residues 1302–1374 and 1444–1486; these read PCET…TTST and TVTS…TTVS. Positions 1308–1321 are enriched in low complexity; the sequence is TGTTNTATTSNAGS. An HCF repeat 7; degenerate repeat occupies 1358–1383; the sequence is QQPAGGRPCETHQTTSTGTTMSVSVG. An HCF repeat 8 repeat occupies 1423–1448; sequence QRVCSNPPCETHETGTTHTATTVTSN. Over residues 1465-1475 the composition is skewed to polar residues; it reads VVSTQGDSANI. Residues 1476-1486 are compositionally biased toward low complexity; the sequence is TSSSGITTTVS. Thr-1500 is subject to Phosphothreonine. Phosphoserine is present on residues Ser-1506, Ser-1559, and Ser-1826. 2 Fibronectin type-III domains span residues 1853–1943 and 1945–2061; these read PPPP…TCLP and FPGA…TSKD. Glycyl lysine isopeptide (Lys-Gly) (interchain with G-Cter in ubiquitin) cross-links involve residues Lys-1862 and Lys-1863. The residue at position 1893 (Ser-1893) is a Phosphoserine. Residues 2049–2090 form a disordered region; that stretch reads ATQVRWLQETSKDSSGTKPASKRPMSSPEMKSAPKKSKADGQ. N6-acetyllysine is present on Lys-2060. A Glycyl lysine isopeptide (Lys-Gly) (interchain with G-Cter in SUMO2) cross-link involves residue Lys-2079.

In terms of assembly, composed predominantly of six polypeptides ranging from 110 to 150 kDa and a minor 300 kDa polypeptide. The majority of N- and C-terminal cleavage products remain tightly, albeit non-covalently, associated. Interacts with POU2F1, CREB3, ZBTB17, EGR2, E2F4, CREBZF, SP1, GABP2, Sin3 HDAC complex (SIN3A, HDAC1, HDAC2, SUDS3), SAP30, SIN3B and FHL2. Component of a MLL1 complex, composed of at least the core components KMT2A/MLL1, ASH2L, HCFC1, WDR5 and RBBP5, as well as the facultative components BACC1, CHD8, DPY30, E2F6, HCFC2, HSP70, INO80C, KANSL1, LAS1L, MAX, MCRS1, MEN1, MGA, KAT8, PELP1, PHF20, PRP31, RING2, RUVBL1, RUVBL2, SENP3, TAF1, TAF4, TAF6, TAF7, TAF9 and TEX10. Component of a THAP1/THAP3-HCFC1-OGT complex that is required for the regulation of the transcriptional activity of RRM1. Interacts directly with THAP3 (via its HBM). Interacts (via the Kelch-repeat domain) with THAP1 (via the HBM); the interaction recruits HCHC1 to the RRM1. Interacts directly with OGT; the interaction, which requires the HCFC1 cleavage site domain, glycosylates and promotes the proteolytic processing of HCFC1 and retains OGT in the nucleus. Component of the SET1 complex, at least composed of the catalytic subunit (SETD1A or SETD1B), WDR5, WDR82, RBBP5, ASH2L, CXXC1, HCFC1 and DPY30. Component of the NSL complex at least composed of MOF/KAT8, KANSL1, KANSL2, KANSL3, MCRS1, PHF20, OGT1/OGT, WDR5 and HCFC1. Component of a complex at least composed of ZNF335, HCFC1, CCAR2, EMSY, MKI67, RBBP5, ASH2L and WDR5; the complex is formed as a result of interactions between components of a nuclear receptor-mediated transcription complex and a histone methylation complex. Within the complex interacts with ZNF335. Interacts with TET2 and TET3. Interacts with HCFC1R1. Interacts with THAP11. Interacts (via Kelch domain) with KMT2E (via HBM motif). Interacts with E2F1. Accessory scaffold component of the polycomb repressive deubiquitinase (PR-DUB) complex, at least composed of BAP1, one of ASXL1, ASXL2 or (probably) ASXL3 and one of MBD5 or MBD6; the PR-DUB core associates with a number of accessory proteins, including FOXK1, FOXK2, KDM1B, HCFC1, YY1 and OGT. Interacts with YY1 (via Gly-rich region); the interaction is direct. Interacts with BAP1 (via HBM-like motif). In terms of processing, proteolytically cleaved at one or several PPCE--THET sites within the HCF repeats. Cleavage is promoted by O-glycosylation. Further cleavage of the primary N- and C-terminal chains results in a 'trimming' and accumulation of the smaller chains. Cleavage is promoted by O-glycosylation. O-glycosylated. GlcNAcylation by OGT promotes proteolytic processing. Post-translationally, ubiquitinated. Lys-1862 and Lys-1863 are ubiquitinated both via 'Lys-48'- and 'Lys-63'-linked polyubiquitin chains. BAP1 mediated deubiquitination of 'Lys-48'-linked polyubiquitin chains; deubiquitination by BAP1 does not seem to stabilize the protein.

The protein resides in the cytoplasm. It is found in the nucleus. Transcriptional coregulator. Serves as a scaffold protein, bridging interactions between transcription factors, including THAP11 and ZNF143, and transcriptional coregulators. Involved in control of the cell cycle. Also antagonizes transactivation by ZBTB17 and GABP2; represses ZBTB17 activation of the p15(INK4b) promoter and inhibits its ability to recruit p300. Coactivator for EGR2 and GABP2. Tethers the chromatin modifying Set1/Ash2 histone H3 'Lys-4' methyltransferase (H3K4me) and Sin3 histone deacetylase (HDAC) complexes (involved in the activation and repression of transcription respectively) together. As part of the NSL complex it may be involved in acetylation of nucleosomal histone H4 on several lysine residues. Recruits KMT2E to E2F1 responsive promoters promoting transcriptional activation and thereby facilitates G1 to S phase transition. Modulates expression of homeobox protein PDX1, perhaps acting in concert with transcription factor E2F1, thereby regulating pancreatic beta-cell growth and glucose-stimulated insulin secretion. May negatively modulate transcriptional activity of FOXO3. In Mesocricetus auratus (Golden hamster), this protein is Host cell factor 1.